Reading from the N-terminus, the 130-residue chain is Protein NrdI (130 aa).

Belongs to the NrdI family.

In terms of biological role, probably involved in ribonucleotide reductase function. This is Protein NrdI from Staphylococcus carnosus (strain TM300).